A 173-amino-acid polypeptide reads, in one-letter code: Alpha-crystallin A chain (173 aa).

An N-acetylmethionine modification is found at Met1. A sHSP domain is found at 52-162 (LFRSVLESGI…SHSERPIPVS (111 aa)). Zn(2+) is bound by residues His100, Glu102, His107, and His154. Residues 142 to 173 (SGPKVPSNMDPSHSERPIPVSREEKPTSAPSS) are disordered. The span at 153–167 (SHSERPIPVSREEKP) shows a compositional bias: basic and acidic residues. Ser162 carries O-linked (GlcNAc) serine glycosylation.

It belongs to the small heat shock protein (HSP20) family. Heteropolymer composed of three CRYAA and one CRYAB subunits. Inter-subunit bridging via zinc ions enhances stability, which is crucial as there is no protein turn over in the lens. Can also form homodimers and homotetramers (dimers of dimers) which serve as the building blocks of homooligomers. Within homooligomers, the zinc-binding motif is created from residues of 3 different molecules. His-100 and Glu-102 from one molecule are ligands of the zinc ion, and His-107 and His-154 residues from additional molecules complete the site with tetrahedral coordination geometry.

The protein localises to the cytoplasm. The protein resides in the nucleus. Functionally, contributes to the transparency and refractive index of the lens. May act as a chaperone, preventing aggregation of various proteins under a wide range of stress conditions. The chain is Alpha-crystallin A chain (CRYAA) from Gallus gallus (Chicken).